Consider the following 385-residue polypeptide: Cyclin-A3-2 (385 aa).

Residues 1–110 (MADKENSTPA…STSTASPSSG (110 aa)) form a disordered region. Low complexity-rich tracts occupy residues 7–41 (STPA…GAPP), 74–88 (PSSK…AAAP), and 96–110 (PVSS…PSSG).

It belongs to the cyclin family. Cyclin AB subfamily.

The sequence is that of Cyclin-A3-2 (CYCA3-2) from Oryza sativa subsp. japonica (Rice).